The sequence spans 98 residues: NADH-ubiquinone oxidoreductase chain 4L (98 aa).

Transmembrane regions (helical) follow at residues 1–21 (MLPIHLNLTVAFFLALAGVLI), 29–49 (TLLCLEGMMLSLFILMALMIT), and 59–79 (IPLILLVFSACEAGVGLALLV).

It belongs to the complex I subunit 4L family. Core subunit of respiratory chain NADH dehydrogenase (Complex I) which is composed of 45 different subunits.

Its subcellular location is the mitochondrion inner membrane. It carries out the reaction a ubiquinone + NADH + 5 H(+)(in) = a ubiquinol + NAD(+) + 4 H(+)(out). In terms of biological role, core subunit of the mitochondrial membrane respiratory chain NADH dehydrogenase (Complex I) which catalyzes electron transfer from NADH through the respiratory chain, using ubiquinone as an electron acceptor. Part of the enzyme membrane arm which is embedded in the lipid bilayer and involved in proton translocation. This is NADH-ubiquinone oxidoreductase chain 4L (MT-ND4L) from Phascogale tapoatafa (Common wambenger).